Consider the following 113-residue polypeptide: Ribonuclease P protein component (113 aa).

The protein belongs to the RnpA family. In terms of assembly, consists of a catalytic RNA component (M1 or rnpB) and a protein subunit.

The enzyme catalyses Endonucleolytic cleavage of RNA, removing 5'-extranucleotides from tRNA precursor.. Functionally, RNaseP catalyzes the removal of the 5'-leader sequence from pre-tRNA to produce the mature 5'-terminus. It can also cleave other RNA substrates such as 4.5S RNA. The protein component plays an auxiliary but essential role in vivo by binding to the 5'-leader sequence and broadening the substrate specificity of the ribozyme. The sequence is that of Ribonuclease P protein component from Clostridium novyi (strain NT).